A 264-amino-acid polypeptide reads, in one-letter code: Undecaprenyl-diphosphatase (264 aa).

8 helical membrane-spanning segments follow: residues 7–27 (IVIP…PVSS), 45–65 (TKIL…LFFY), 86–106 (IHVL…YNKI), 109–129 (LFNP…LIIA), 145–165 (INLV…YPGF), 186–206 (VNFS…LDLI), 215–235 (LNIP…FLLI), and 244–264 (KVSL…IYFI).

Belongs to the UppP family.

The protein resides in the cell membrane. The catalysed reaction is di-trans,octa-cis-undecaprenyl diphosphate + H2O = di-trans,octa-cis-undecaprenyl phosphate + phosphate + H(+). Functionally, catalyzes the dephosphorylation of undecaprenyl diphosphate (UPP). Confers resistance to bacitracin. This is Undecaprenyl-diphosphatase from Buchnera aphidicola subsp. Schizaphis graminum (strain Sg).